Reading from the N-terminus, the 480-residue chain is Acyl-lipid (8-3)-desaturase (480 aa).

Residues 1–30 (MAPHSADTAGLVPSDELRLRTSNSKGPEQE) form a disordered region. The 75-residue stretch at 33 to 107 (LKKYTLEDVS…LAKYCIGELV (75 aa)) folds into the Cytochrome b5 heme-binding domain. Heme-binding residues include His-68 and His-90. The next 2 helical transmembrane spans lie at 151 to 171 (IHPH…ASYY) and 173 to 193 (AFFW…MGFF). Positions 203–207 (HDGNH) match the Histidine box-1 motif. The short motif at 238 to 243 (HVVGHH) is the Histidine box-2 element. 3 helical membrane passes run 280 to 300 (IYLA…DDFL), 322 to 342 (IFFQ…SVYG), and 348 to 368 (TFLA…AFLF). A Histidine box-3 motif is present at residues 419–423 (QIEHH).

The protein belongs to the fatty acid desaturase type 1 family. It depends on Fe(2+) as a cofactor.

It is found in the membrane. The catalysed reaction is an (8Z,11Z,14Z)-icosatrienoyl-containing glycerolipid + 2 Fe(II)-[cytochrome b5] + O2 + 2 H(+) = (5Z,8Z,11Z,14Z)-eicosatetraenoyl-containing glycerolipid + 2 Fe(III)-[cytochrome b5] + 2 H2O. It carries out the reaction an (8Z,11Z,14Z,17Z)-eicosatetraenoyl-containing glycerolipid + 2 Fe(II)-[cytochrome b5] + O2 + 2 H(+) = a (5Z,8Z,11Z,14Z,17Z)-eicosapentaenoyl-containing glycerolipid + 2 Fe(III)-[cytochrome b5] + 2 H2O. Fatty acid desaturase that introduces a cis double bond at the 5-position in 20-carbon polyunsaturated fatty acids incorporated in a glycerolipid that contain a Delta(8) double bond. This chain is Acyl-lipid (8-3)-desaturase, found in Physcomitrium patens (Spreading-leaved earth moss).